A 189-amino-acid polypeptide reads, in one-letter code: Elongation factor P (189 aa).

This sequence belongs to the elongation factor P family.

The protein localises to the cytoplasm. The protein operates within protein biosynthesis; polypeptide chain elongation. Its function is as follows. Involved in peptide bond synthesis. Stimulates efficient translation and peptide-bond synthesis on native or reconstituted 70S ribosomes in vitro. Probably functions indirectly by altering the affinity of the ribosome for aminoacyl-tRNA, thus increasing their reactivity as acceptors for peptidyl transferase. This Rhizobium etli (strain CIAT 652) protein is Elongation factor P.